Reading from the N-terminus, the 657-residue chain is Broad substrate specificity ATP-binding cassette transporter ABCG2 (657 aa).

The interval 1–24 (MSSSNDHVLVPMSQRNNNGLPRTN) is disordered. Residues 1–393 (MSSSNDHVLV…SFKNLLGNPQ (393 aa)) are Cytoplasmic-facing. Residues 13-24 (SQRNNNGLPRTN) are compositionally biased toward polar residues. Residues 48–285 (VKSGFLVRKT…FASAGYHCEP (238 aa)) enclose the ABC transporter domain. ATP-binding positions include 79–86 (GPTGGGKS), 183–189 (RGISGGE), Glu210, and His242. In terms of domain architecture, ABC transmembrane type-2 spans 389 to 653 (LGNPQASVAQ…TIAYLKLLFL (265 aa)). The helical transmembrane segment at 394–414 (ASVAQLIVTVILGLIIGAIYF) threads the bilayer. Residues 415–428 (DLKYDAAGMQNRAG) are Extracellular-facing. Residues 429–449 (VLFFLTTNQCFSSVSAVELFV) traverse the membrane as a helical segment. The Cytoplasmic portion of the chain corresponds to 450–477 (VEKKLFIHEYISGYYRVSSYFFGKVMSD). Residues 478 to 498 (LLPMRFLPSVIFTCVLYFMLG) traverse the membrane as a helical segment. Residues 499-506 (LKKTVDAF) lie on the Extracellular side of the membrane. A helical transmembrane segment spans residues 507-527 (FIMMFTLIMVAYTASSMALAI). At 528–535 (ATGQSVVS) the chain is on the cytoplasmic side. The helical transmembrane segment at 536-556 (VATLLMTIAFVFMMLFSGLLV) threads the bilayer. Topologically, residues 557-632 (NLRTIGPWLS…LSPWGLWKNH (76 aa)) are extracellular. Cys592 and Cys610 are disulfide-bonded. N-linked (GlcNAc...) asparagine glycosylation is found at Asn596 and Asn600. The chain crosses the membrane as a helical span at residues 633–653 (VALACMIIIFLTIAYLKLLFL). The Cytoplasmic portion of the chain corresponds to 654 to 657 (KKYS).

The protein belongs to the ABC transporter superfamily. ABCG family. Eye pigment precursor importer (TC 3.A.1.204) subfamily. Homodimer; disulfide-linked. The minimal functional unit is a homodimer, but the major oligomeric form in plasma membrane is a homotetramer with possibility of higher order oligomerization up to homododecamers. In terms of processing, N-glycosylated. Glycosylation-deficient ABCG2 is normally expressed and functional. Phosphorylated. Phosphorylation may regulate the localization to the plasma membrane, the homooligomerization and therefore, the activity of the transporter. As to expression, highly expressed in kidney. Lower expression in liver, colon, heart, spleen, and placenta. Expressed in mammary gland. Expressed in intestinal villi and renal proximal tubules, hepatic bile canalicular membranes, and placental labyrinth cells (at protein level).

The protein resides in the cell membrane. It is found in the apical cell membrane. Its subcellular location is the mitochondrion membrane. The enzyme catalyses ATP + H2O + xenobioticSide 1 = ADP + phosphate + xenobioticSide 2.. It catalyses the reaction riboflavin(in) + ATP + H2O = riboflavin(out) + ADP + phosphate + H(+). It carries out the reaction pheophorbide a(in) + ATP + H2O = pheophorbide a(out) + ADP + phosphate + H(+). The catalysed reaction is urate(in) + ATP + H2O = urate(out) + ADP + phosphate + H(+). The enzyme catalyses indoxyl sulfate(in) + ATP + H2O = indoxyl sulfate(out) + ADP + phosphate + H(+). It catalyses the reaction sphing-4-enine 1-phosphate(in) + ATP + H2O = sphing-4-enine 1-phosphate(out) + ADP + phosphate + H(+). It carries out the reaction estrone 3-sulfate(in) + ATP + H2O = estrone 3-sulfate(out) + ADP + phosphate + H(+). The catalysed reaction is dehydroepiandrosterone 3-sulfate(in) + ATP + H2O = dehydroepiandrosterone 3-sulfate(out) + ADP + phosphate + H(+). The enzyme catalyses 4-methylumbelliferone sulfate(in) + ATP + H2O = 4-methylumbelliferone sulfate(out) + ADP + phosphate + H(+). It catalyses the reaction 5,7-dimethyl-2-methylamino-4-(3-pyridylmethyl)-1,3-benzothiazol-6-yl beta-D-glucuronate(in) + ATP + H2O = 5,7-dimethyl-2-methylamino-4-(3-pyridylmethyl)-1,3-benzothiazol-6-yl beta-D-glucuronate(out) + ADP + phosphate + H(+). It carries out the reaction 4-methylumbelliferone beta-D-glucuronate(in) + ATP + H2O = 4-methylumbelliferone beta-D-glucuronate(out) + ADP + phosphate + H(+). The catalysed reaction is 5,7-dimethyl-2-methylamino-4-(3-pyridylmethyl)-1,3-benzothiazol-6-yl sulfate(in) + ATP + H2O = 5,7-dimethyl-2-methylamino-4-(3-pyridylmethyl)-1,3-benzothiazol-6-yl sulfate(out) + ADP + phosphate + H(+). The enzyme catalyses 17beta-estradiol 17-O-(beta-D-glucuronate)(in) + ATP + H2O = 17beta-estradiol 17-O-(beta-D-glucuronate)(out) + ADP + phosphate + H(+). It catalyses the reaction methotrexate(in) + ATP + H2O = methotrexate(out) + ADP + phosphate + H(+). It carries out the reaction itaconate(in) + ATP + H2O = itaconate(out) + ADP + phosphate + H(+). Its activity is regulated as follows. Specifically inhibited by the fungal toxin fumitremorgin C and Ko143. Its function is as follows. Broad substrate specificity ATP-dependent transporter of the ATP-binding cassette (ABC) family that actively extrudes a wide variety of physiological compounds, dietary toxins and xenobiotics from cells. Involved in porphyrin homeostasis, mediating the export of protoporphyrin IX (PPIX) from both mitochondria to cytosol and cytosol to extracellular space, it also functions in the cellular export of heme. Also mediates the efflux of sphingosine-1-P from cells. Acts as a urate exporter functioning in both renal and extrarenal urate excretion. In kidney, it also functions as a physiological exporter of the uremic toxin indoxyl sulfate. Also involved in the excretion of steroids like estrone 3-sulfate/E1S, 3beta-sulfooxy-androst-5-en-17-one/DHEAS, and other sulfate conjugates. Mediates the secretion of the riboflavin and biotin vitamins into milk. Extrudes pheophorbide a, a phototoxic porphyrin catabolite of chlorophyll, reducing its bioavailability. Plays an important role in the exclusion of xenobiotics from the brain. It confers to cells a resistance to multiple drugs and other xenobiotics including mitoxantrone, pheophorbide, camptothecin, methotrexate, azidothymidine, and the anthracyclines daunorubicin and doxorubicin, through the control of their efflux. In placenta, it limits the penetration of drugs from the maternal plasma into the fetus. May play a role in early stem cell self-renewal by blocking differentiation. In inflammatory macrophages, exports itaconate from the cytosol to the extracellular compartment and limits the activation of TFEB-dependent lysosome biogenesis involved in antibacterial innate immune response. The protein is Broad substrate specificity ATP-binding cassette transporter ABCG2 (Abcg2) of Mus musculus (Mouse).